A 248-amino-acid polypeptide reads, in one-letter code: 2,3-bisphosphoglycerate-dependent phosphoglycerate mutase (248 aa).

Substrate contacts are provided by residues 8-15, 21-22, Arg-60, 87-90, Lys-98, 114-115, and 183-184; these read RHGESTWN, TG, ERHY, RR, and GN. The active-site Tele-phosphohistidine intermediate is the His-9. The Proton donor/acceptor role is filled by Glu-87.

Belongs to the phosphoglycerate mutase family. BPG-dependent PGAM subfamily. Homodimer.

It carries out the reaction (2R)-2-phosphoglycerate = (2R)-3-phosphoglycerate. It participates in carbohydrate degradation; glycolysis; pyruvate from D-glyceraldehyde 3-phosphate: step 3/5. Its function is as follows. Catalyzes the interconversion of 2-phosphoglycerate and 3-phosphoglycerate. The chain is 2,3-bisphosphoglycerate-dependent phosphoglycerate mutase from Burkholderia orbicola (strain MC0-3).